The chain runs to 333 residues: MANWLVLAEQVLGGHELTDEEALAILDCPDEELLLLLQGAYRIRSAYYGNKVKLNMIINAKSGLCPENCGYCSQSAVSTAPVKTYKMVDKETLLRGAEEAHRLRIGTYCIVASGRGPSDKEIDTVVSAVKEIKERFGLKVCACLGILKPEQAARLKEAGVDRYNHNINTSKQHHPNITTSHTYDDRVRTVETVKEAGLSPCSGVIIGMKETKRDVVDMARSLRALDADSIPVNFLHAIDGTPLAGTNELNPRYCLKVLALFRYMNPTKEIRIAGGREVNLRSLQPLGLYAANSIFVGDYLTTAGQEKSADYQMLEDLGFEIEFAPAPQAGVVS.

Residues 47–273 (YYGNKVKLNM…MNPTKEIRIA (227 aa)) form the Radical SAM core domain. [4Fe-4S] cluster is bound by residues Cys-65, Cys-69, and Cys-72. The [2Fe-2S] cluster site is built by Cys-109, Cys-141, Cys-201, and Arg-271.

It belongs to the radical SAM superfamily. Biotin synthase family. As to quaternary structure, homodimer. The cofactor is [4Fe-4S] cluster. It depends on [2Fe-2S] cluster as a cofactor.

The enzyme catalyses (4R,5S)-dethiobiotin + (sulfur carrier)-SH + 2 reduced [2Fe-2S]-[ferredoxin] + 2 S-adenosyl-L-methionine = (sulfur carrier)-H + biotin + 2 5'-deoxyadenosine + 2 L-methionine + 2 oxidized [2Fe-2S]-[ferredoxin]. The protein operates within cofactor biosynthesis; biotin biosynthesis; biotin from 7,8-diaminononanoate: step 2/2. Its function is as follows. Catalyzes the conversion of dethiobiotin (DTB) to biotin by the insertion of a sulfur atom into dethiobiotin via a radical-based mechanism. This is Biotin synthase from Geobacillus kaustophilus (strain HTA426).